The chain runs to 536 residues: Cytochrome P450 monooxygenase phqM (536 aa).

Cysteine 464 serves as a coordination point for heme.

It belongs to the cytochrome P450 family. Requires heme as cofactor.

Its pathway is alkaloid biosynthesis. In terms of biological role, cytochrome P450 monooxygenase; part of the gene cluster that mediates the biosynthesis of paraherquamide, a fungal indole alkaloid that belongs to a family of natural products containing a characteristic bicyclo[2.2.2]diazaoctane core. The first steps in the biosynthesis of paraherquamide is the production of the beta-methyl-proline precursor from L-isoleucine. They require oxidation of a terminally hydroxylated L-isoleucine to the corresponding aldehyde by enzymes which have still to be identified. Spontaneous cyclization and dehydration would yield the 4-methyl pyrolline-5-carboxylic acid, which is then reduced by the pyrroline-5-carboxylate reductase phqD leading to the beta-methyl-proline precursor. The next step of paraherquamide biosynthesis involves coupling of beta-methyl-proline and L-tryptophan by the bimodular NRPS phqB, to produce a monooxopiperazine intermediate. The reductase (R) domain of phqB utilizes NADPH for hydride transfer to reduce the thioester bond of the T domain-tethered linear dipeptide to a hemithioaminal intermediate, which spontaneously cleaves the C-S bond to release the aldehyde product. This compound undergoes spontaneous cyclization and dehydration to give a dienamine which is reverse prenylated at C-2 by the reverse prenyltransferase phqJ. The other prenyltransferase present in the cluster, phqI may be a redundant gene in the pathway. During biosynthetic assembly, the key step to produce the polycyclic core is catalyzed by the bifunctional reductase and intramolecular [4+2] Diels-Alderase, phqE, resulting in formation of the [2.2.2] diazaoctane intermediate preparaherquamide. Following formation of preparaherquamide, an indole 2,3-epoxidation-initiated pinacol-like rearrangement is catalyzed by the phqK FAD-dependent monooxygenase. The prenyltransferase phqA, the cytochrome P450 monooxygenase phqL, and the FAD-linked oxidoreductase phqH (or the cytochrome P450 monooxygenase phqM), are proposed to be involved in the formation of the pyran ring. The FAD-dependent monooxygenase phqK is likely responsible for generation of the spiro-oxindole, and the N-methylation is likely mediated by the phqN methyltransferase leading to the isolable natural product paraherquamide F. However, the order of these biosynthetic steps has still to be determined. In late-stage paraherquamide biosynthesis, the third P450 monooxygenase, phqO, is probably responsible for the C-14 hydroxylation, transforming paraherquamide F to paraherquamide G, and paraherquamide E to the final product paraherquamide A. The expansion from the 6-membered ring pyran (in paraherquamides F and G) to the 7-membered dioxepin ring (in paraherquamides A and E) represents a poorly understood but intriguing process that probably involves the 2-oxoglutarate-dependent dioxygenase phqC. Finally, the remaining members of the paraherquamide cluster, including phqI as well as phqM (or phqH), do not have a clearly prescribed role and appear to be redundant. This chain is Cytochrome P450 monooxygenase phqM, found in Penicillium fellutanum.